The sequence spans 635 residues: BTB/POZ domain-containing protein SETH6 (635 aa).

The 66-residue stretch at 39–104 (SDLTIEVGSA…CYGVGVQYNS (66 aa)) folds into the BTB domain. The region spanning 206–494 (DWWGRSLPIL…VQVLFYEQTR (289 aa)) is the NPH3 domain. At Tyr435 the chain carries Phosphotyrosine. The disordered stretch occupies residues 604–635 (QSVASSGKKHTEEKTNSERRFMFQKRRCHSVS). Residues 612–624 (KHTEEKTNSERRF) show a composition bias toward basic and acidic residues. The span at 625–635 (MFQKRRCHSVS) shows a compositional bias: basic residues.

The protein belongs to the NPH3 family.

The protein operates within protein modification; protein ubiquitination. Its function is as follows. May act as a substrate-specific adapter of an E3 ubiquitin-protein ligase complex (CUL3-RBX1-BTB) which mediates the ubiquitination and subsequent proteasomal degradation of target proteins. In Arabidopsis thaliana (Mouse-ear cress), this protein is BTB/POZ domain-containing protein SETH6 (SETH6).